Here is a 96-residue protein sequence, read N- to C-terminus: Large ribosomal subunit protein bL28 (96 aa).

The segment at 1–21 (MSRVCELTGKGPMTGNNVSHA) is disordered.

Belongs to the bacterial ribosomal protein bL28 family.

This Jannaschia sp. (strain CCS1) protein is Large ribosomal subunit protein bL28.